The following is a 51-amino-acid chain: Large ribosomal subunit protein eL39x (51 aa).

This sequence belongs to the eukaryotic ribosomal protein eL39 family.

The protein is Large ribosomal subunit protein eL39x (RPL39C) of Oryza sativa subsp. japonica (Rice).